Consider the following 1034-residue polypeptide: Isoleucine--tRNA ligase (1034 aa).

The short motif at 46–56 (PYCSGAIHLGT) is the 'HIGH' region element. The 'KMSKS' region signature appears at 598–602 (KMSKS). Lysine 601 provides a ligand contact to ATP.

It belongs to the class-I aminoacyl-tRNA synthetase family. IleS type 2 subfamily. Monomer. Requires Zn(2+) as cofactor.

The protein localises to the cytoplasm. It carries out the reaction tRNA(Ile) + L-isoleucine + ATP = L-isoleucyl-tRNA(Ile) + AMP + diphosphate. Its function is as follows. Catalyzes the attachment of isoleucine to tRNA(Ile). As IleRS can inadvertently accommodate and process structurally similar amino acids such as valine, to avoid such errors it has two additional distinct tRNA(Ile)-dependent editing activities. One activity is designated as 'pretransfer' editing and involves the hydrolysis of activated Val-AMP. The other activity is designated 'posttransfer' editing and involves deacylation of mischarged Val-tRNA(Ile). This chain is Isoleucine--tRNA ligase, found in Methanococcus maripaludis (strain DSM 14266 / JCM 13030 / NBRC 101832 / S2 / LL).